Here is a 996-residue protein sequence, read N- to C-terminus: Leucine-rich repeat receptor-like kinase protein THICK TASSEL DWARF1 (996 aa).

The first 26 residues, 1-26 (MPPPTFLLGLLLLLLLAAAAPAPASA), serve as a signal peptide directing secretion. LRR repeat units lie at residues 78 to 103 (TSRVVAINLTAVPLHGGALPPEVALL), 104 to 127 (DALASLTVANCYLRGRLPPALASM), 128 to 151 (PALRHLNLSNNNLSGPFPPPPPAA), 153 to 178 (FPALEIVDVYNNNLSGPLPPLGAPHA), 180 to 201 (SLRYLHLGGNYFNGSIPDTFGD), 202 to 226 (LAALEYLGLNGNALSGRVPPSLSRL), 251 to 275 (LQSLVRLDMSSCTLTGPIPPELARL), 276 to 299 (SRLDTLFLALNQLTGEIPPELGAL), 300 to 323 (TSLRSLDLSINDLAGEIPASFAAL), 325 to 349 (NLKLLNLFRNHLRGEIPAFLGDFPF), 351 to 371 (EVLQVWDNNLTGPLPPALGRN), 372 to 395 (GRLKTLDVTSNHLTGTIPPDLCAG), 397 to 419 (NLQLLVLMDNGFFGSIPESLGDC), 420 to 443 (KTLTRVRLGKNFLTGPVPAGLFDL), 445 to 466 (QANMLELTDNMLTGELPDVIAG), 467 to 490 (DKIGMLMLGNNRIGGRIPAAIGNL), 491 to 514 (PALQTLSLESNNFSGPLPPEIGRL), 516 to 538 (NLTRLNASGNALTGGIPRELMGC), 539 to 562 (ASLGAVDLSRNGLTGEIPDTVTSL), 563 to 586 (KILCTLNVSRNRLSGELPAAMANM), and 587 to 611 (TSLTTLDVSYNQLSGPVPMQGQFLV). The chain crosses the membrane as a helical span at residues 646-666 (KKLLVWLVVLLTLLVLAVLGA). Residues 703–978 (LKEDNIIGKG…TMREVVHMLS (276 aa)) enclose the Protein kinase domain. ATP contacts are provided by residues 709–717 (IGKGGAGIV) and lysine 731. Aspartate 828 functions as the Proton acceptor in the catalytic mechanism.

The protein belongs to the protein kinase superfamily. Ser/Thr protein kinase family. In terms of tissue distribution, highly expressed in the apex of the vegetative seedlings. Lower expression in young leaves, ears and tassels, embryos and roots. Not expressed in the shoot meristem itself. Detected in the three outermost layers of the inflorescence meristem, and on its flanks at positions of prospective spikelet pair meristems. Not confined to meristematic cells but also detected in primordia of glumes, lemmas and stamens.

The protein resides in the membrane. It carries out the reaction L-seryl-[protein] + ATP = O-phospho-L-seryl-[protein] + ADP + H(+). The enzyme catalyses L-threonyl-[protein] + ATP = O-phospho-L-threonyl-[protein] + ADP + H(+). Its function is as follows. Receptor-like kinase protein that regulates meristem size during inflorescence and flower development. Promotes vegetative meristem growth and restricts inflorescence and floral meristem growth. Based on additive and synergistic phenotypes of double mutants, it is probable that unlike CLV1 and CLV2 in A.thaliana, TD1 and FAE2 do not function exclusively in a single pathway. However, KN-1 and TD1 do function in a linear pathway to maintain vegetative meristem homeostasis, but they may interact with different partners during development. This Zea mays (Maize) protein is Leucine-rich repeat receptor-like kinase protein THICK TASSEL DWARF1 (TD1).